The chain runs to 100 residues: Aspartyl/glutamyl-tRNA(Asn/Gln) amidotransferase subunit C (100 aa).

It belongs to the GatC family. Heterotrimer of A, B and C subunits.

It catalyses the reaction L-glutamyl-tRNA(Gln) + L-glutamine + ATP + H2O = L-glutaminyl-tRNA(Gln) + L-glutamate + ADP + phosphate + H(+). It carries out the reaction L-aspartyl-tRNA(Asn) + L-glutamine + ATP + H2O = L-asparaginyl-tRNA(Asn) + L-glutamate + ADP + phosphate + 2 H(+). Its function is as follows. Allows the formation of correctly charged Asn-tRNA(Asn) or Gln-tRNA(Gln) through the transamidation of misacylated Asp-tRNA(Asn) or Glu-tRNA(Gln) in organisms which lack either or both of asparaginyl-tRNA or glutaminyl-tRNA synthetases. The reaction takes place in the presence of glutamine and ATP through an activated phospho-Asp-tRNA(Asn) or phospho-Glu-tRNA(Gln). The chain is Aspartyl/glutamyl-tRNA(Asn/Gln) amidotransferase subunit C from Rickettsia rickettsii (strain Sheila Smith).